The primary structure comprises 205 residues: HTH-type transcriptional repressor KstR2 (205 aa).

Positions 10 to 70 (ASRRDELLQL…EVLRDFLDWL (61 aa)) constitute an HTH tetR-type domain. The segment at residues 33–52 (TVRDIADSAGILSGSLYHHF) is a DNA-binding region (H-T-H motif).

As to quaternary structure, homodimer.

Controls the expression of a small regulon that may play a role in the utilization of cholesterol. This Mycolicibacterium smegmatis (strain ATCC 700084 / mc(2)155) (Mycobacterium smegmatis) protein is HTH-type transcriptional repressor KstR2 (kstR2).